Here is a 272-residue protein sequence, read N- to C-terminus: Endogenous Bornavirus-like nucleoprotein 2 (272 aa).

The tract at residues 48–70 (MSHLRKDSQPSSPGDDAMDRSGL) is disordered.

May act as an RNA-binding protein. The C-terminal region is highly homologous to the bornavirus nucleocapsid N protein that binds viral RNA and oligomerizes. The viral protein also possesses a nuclear import and a nuclear export signal. These 2 signals seem absent in EBLN-2 supporting an unrelated function in Human. The protein is Endogenous Bornavirus-like nucleoprotein 2 (EBLN2) of Homo sapiens (Human).